Here is a 497-residue protein sequence, read N- to C-terminus: Alkene monooxygenase system, oxygenase component subunit alpha (497 aa).

Residues Glu104, Glu134, His137, Glu197, Glu231, and His234 each coordinate Fe cation.

Belongs to the TmoA/XamoA family. In terms of assembly, the alkene monooxygenase multicomponent enzyme system is composed of an electron transfer component and a monooxygenase component interacting with the effector protein XamoD. The electron transfer component is composed of a ferredoxin reductase (XamoF) and a ferredoxin (XamoC), and the monooxygenase component is formed by a heterohexamer (dimer of heterotrimers) of two alpha subunits (XamoA), two beta subunits (XamoE) and two gamma subunits (XamoB). Requires Fe(2+) as cofactor.

The protein resides in the cytoplasm. The catalysed reaction is propene + NADH + O2 + H(+) = 1,2-epoxypropane + NAD(+) + H2O. Inhibited by propyne. In terms of biological role, component of the alkene monooxygenase multicomponent enzyme system which catalyzes the O2- and NADH-dependent epoxidation of short chain (C2 to C6) alkenes to their corresponding epoxides. Also able to catalyze the oxidation of a number of chlorinated alkenes, including trichloroethylene, cis- and trans-1,2-dichloroethylene, vinyl chloride, 1-chloropropylene, 1,3-dichloropropylene and 2,3-dichloropropylene. In Xanthobacter autotrophicus (strain ATCC BAA-1158 / Py2), this protein is Alkene monooxygenase system, oxygenase component subunit alpha.